Reading from the N-terminus, the 450-residue chain is Tubulin alpha chain (450 aa).

Residue glutamine 11 participates in GTP binding. Lysine 40 bears the N6-acetyllysine mark. Residues glutamate 71, glycine 144, threonine 145, threonine 179, asparagine 206, and asparagine 228 each coordinate GTP. Glutamate 71 lines the Mg(2+) pocket. The active site involves glutamate 254.

It belongs to the tubulin family. In terms of assembly, dimer of alpha and beta chains. A typical microtubule is a hollow water-filled tube with an outer diameter of 25 nm and an inner diameter of 15 nM. Alpha-beta heterodimers associate head-to-tail to form protofilaments running lengthwise along the microtubule wall with the beta-tubulin subunit facing the microtubule plus end conferring a structural polarity. Microtubules usually have 13 protofilaments but different protofilament numbers can be found in some organisms and specialized cells. Mg(2+) serves as cofactor. Post-translationally, undergoes a tyrosination/detyrosination cycle, the cyclic removal and re-addition of a C-terminal tyrosine residue by the enzymes tubulin tyrosine carboxypeptidase (TTCP) and tubulin tyrosine ligase (TTL), respectively. In terms of processing, acetylation of alpha chains at Lys-40 stabilizes microtubules and affects affinity and processivity of microtubule motors. This modification has a role in multiple cellular functions, ranging from cell motility, cell cycle progression or cell differentiation to intracellular trafficking and signaling.

The protein resides in the cytoplasm. The protein localises to the cytoskeleton. It carries out the reaction GTP + H2O = GDP + phosphate + H(+). Functionally, tubulin is the major constituent of microtubules, a cylinder consisting of laterally associated linear protofilaments composed of alpha- and beta-tubulin heterodimers. Microtubules grow by the addition of GTP-tubulin dimers to the microtubule end, where a stabilizing cap forms. Below the cap, tubulin dimers are in GDP-bound state, owing to GTPase activity of alpha-tubulin. The polypeptide is Tubulin alpha chain (TUBA) (Prunus dulcis (Almond)).